The primary structure comprises 348 residues: Tetraacyldisaccharide 4'-kinase (348 aa).

54 to 61 lines the ATP pocket; sequence TVGGAGKT.

It belongs to the LpxK family.

The enzyme catalyses a lipid A disaccharide + ATP = a lipid IVA + ADP + H(+). Its pathway is glycolipid biosynthesis; lipid IV(A) biosynthesis; lipid IV(A) from (3R)-3-hydroxytetradecanoyl-[acyl-carrier-protein] and UDP-N-acetyl-alpha-D-glucosamine: step 6/6. Functionally, transfers the gamma-phosphate of ATP to the 4'-position of a tetraacyldisaccharide 1-phosphate intermediate (termed DS-1-P) to form tetraacyldisaccharide 1,4'-bis-phosphate (lipid IVA). This chain is Tetraacyldisaccharide 4'-kinase, found in Agrobacterium fabrum (strain C58 / ATCC 33970) (Agrobacterium tumefaciens (strain C58)).